We begin with the raw amino-acid sequence, 559 residues long: Nucleoprotein (559 aa).

The segment at M53–I235 is binding site for the cap structure m7GTP. Positions 378 and 380 each coordinate Mn(2+). Positions 388, 495, 498, and 519 each coordinate Zn(2+). Mn(2+) is bound at residue D523.

Belongs to the arenaviridae nucleocapsid protein family. In terms of assembly, homomultimerizes to form the nucleocapsid. Binds to viral genomic RNA. Interacts with glycoprotein G2. Interacts with protein Z; this interaction probably directs the encapsidated genome to budding sites. Interacts with protein L; this interaction does not interfere with Z-L interaction. Interacts with host IKBKE (via Protein kinase domain); the interaction inhibits IKBKE kinase activity.

It is found in the virion. Its subcellular location is the host cytoplasm. In terms of biological role, encapsidates the genome, protecting it from nucleases. The encapsidated genomic RNA is termed the nucleocapsid (NC). Serves as template for viral transcription and replication. The increased presence of protein N in host cell does not seem to trigger the switch from transcription to replication as observed in other negative strain RNA viruses. Through the interaction with host IKBKE, strongly inhibits the phosphorylation and nuclear translocation of host IRF3, a protein involved in interferon activation pathway, leading to the inhibition of interferon-beta and IRF3-dependent promoters activation. Also encodes a functional 3'-5' exoribonuclease that degrades preferentially dsRNA substrates and thereby participates in the suppression of interferon induction. The chain is Nucleoprotein from Sooretamys angouya (Paraguayan rice rat).